The primary structure comprises 413 residues: Inactive serine protease 35 (413 aa).

The signal sequence occupies residues 1-16 (MENMLLWLIFFTPGWT). Residue Asn-90 is glycosylated (N-linked (GlcNAc...) asparagine). The region spanning 124 to 408 (VYGTDSRFSI…ICLWIHGNDA (285 aa)) is the Peptidase S1 domain. Cysteines 154 and 170 form a disulfide. Over residues 191-207 (MRNKSGGKKRRGSKRSR) the composition is skewed to basic residues. Positions 191 to 250 (MRNKSGGKKRRGSKRSRREASGGDQREGTREHLRERAKGGRRRKKSGRGQRIAEGRPSFQ) are disordered. The span at 208 to 228 (REASGGDQREGTREHLRERAK) shows a compositional bias: basic and acidic residues. Over residues 229 to 238 (GGRRRKKSGR) the composition is skewed to basic residues.

It belongs to the peptidase S1 family.

Its subcellular location is the secreted. This Homo sapiens (Human) protein is Inactive serine protease 35 (PRSS35).